Consider the following 161-residue polypeptide: Putative defense protein 2 (161 aa).

The signal sequence occupies residues 1-11 (LSWSALALTSA). The Reelin domain occupies 12–161 (YPTGAPTSAC…SAPVKILSHH (150 aa)). Cys-21 and Cys-98 are joined by a disulfide. N-linked (GlcNAc...) asparagine glycosylation occurs at Asn-91.

The protein belongs to the insect defense protein family.

It localises to the secreted. Its function is as follows. May have antimicrobial activity. The chain is Putative defense protein 2 from Antheraea mylitta (Tasar silkworm).